A 201-amino-acid polypeptide reads, in one-letter code: Outer-membrane lipoprotein LolB (201 aa).

A signal peptide spans 1–18; the sequence is MKWCRLSIILMSLILLAG. C19 is lipidated: N-palmitoyl cysteine. C19 is lipidated: S-diacylglycerol cysteine.

It belongs to the LolB family. Monomer.

The protein localises to the cell outer membrane. Its function is as follows. Plays a critical role in the incorporation of lipoproteins in the outer membrane after they are released by the LolA protein. The sequence is that of Outer-membrane lipoprotein LolB from Nitrosococcus oceani (strain ATCC 19707 / BCRC 17464 / JCM 30415 / NCIMB 11848 / C-107).